The primary structure comprises 168 residues: Thiol peroxidase (168 aa).

Positions 19–168 (PQAGSKAQAF…YDAALNVLKA (150 aa)) constitute a Thioredoxin domain. The active-site Cysteine sulfenic acid (-SOH) intermediate is the Cys61. A disulfide bridge connects residues Cys61 and Cys95.

It belongs to the peroxiredoxin family. Tpx subfamily. In terms of assembly, homodimer.

It catalyses the reaction a hydroperoxide + [thioredoxin]-dithiol = an alcohol + [thioredoxin]-disulfide + H2O. Functionally, thiol-specific peroxidase that catalyzes the reduction of hydrogen peroxide and organic hydroperoxides to water and alcohols, respectively. Plays a role in cell protection against oxidative stress by detoxifying peroxides. The polypeptide is Thiol peroxidase (Salmonella typhimurium (strain LT2 / SGSC1412 / ATCC 700720)).